The primary structure comprises 442 residues: tRNA modification GTPase MnmE (442 aa).

Arg27, Glu84, and Lys124 together coordinate (6S)-5-formyl-5,6,7,8-tetrahydrofolate. Residues 221–366 enclose the TrmE-type G domain; sequence GLHVVIVGAP…LLDALQAFAE (146 aa). GTP contacts are provided by residues 231–236, 250–256, and 275–278; these read NAGKSS, SKEAGTT, and DTAG. Residues Ser235 and Thr256 each contribute to the Mg(2+) site. Residue Lys442 coordinates (6S)-5-formyl-5,6,7,8-tetrahydrofolate.

Belongs to the TRAFAC class TrmE-Era-EngA-EngB-Septin-like GTPase superfamily. TrmE GTPase family. Homodimer. Heterotetramer of two MnmE and two MnmG subunits. Requires K(+) as cofactor.

The protein localises to the cytoplasm. Its function is as follows. Exhibits a very high intrinsic GTPase hydrolysis rate. Involved in the addition of a carboxymethylaminomethyl (cmnm) group at the wobble position (U34) of certain tRNAs, forming tRNA-cmnm(5)s(2)U34. This Brucella suis biovar 1 (strain 1330) protein is tRNA modification GTPase MnmE.